We begin with the raw amino-acid sequence, 487 residues long: Probable cytochrome P450 516A1 (487 aa).

A helical transmembrane segment spans residues 1–21; that stretch reads MIILLLSIIIFILYIVKIFKN. Cys434 serves as a coordination point for heme.

It belongs to the cytochrome P450 family. The cofactor is heme.

The protein localises to the membrane. The polypeptide is Probable cytochrome P450 516A1 (cyp516A1) (Dictyostelium discoideum (Social amoeba)).